The primary structure comprises 178 residues: MNATPEKADDLIVVGKIFSVHGVRGEVKVYSFTDPIENLLDYPRWTLRHEGKVKQVELVSGRGSQKGLVVKLKGLDDRDEARLLSGYEICIPRSLLPNLAADEYYWYQLVGLKVINQDEQLFGKVDHLLETGANDVMVVKPCAGSLDDRERLLPYTEQCVLAIDLEAGVMRVEWDADF.

The PRC barrel domain maps to 101-178 (ADEYYWYQLV…VMRVEWDADF (78 aa)).

Belongs to the RimM family. In terms of assembly, binds ribosomal protein uS19.

The protein localises to the cytoplasm. An accessory protein needed during the final step in the assembly of 30S ribosomal subunit, possibly for assembly of the head region. Essential for efficient processing of 16S rRNA. May be needed both before and after RbfA during the maturation of 16S rRNA. It has affinity for free ribosomal 30S subunits but not for 70S ribosomes. The polypeptide is Ribosome maturation factor RimM (Pseudomonas putida (strain ATCC 47054 / DSM 6125 / CFBP 8728 / NCIMB 11950 / KT2440)).